The sequence spans 370 residues: Putative agmatine deiminase (370 aa).

Catalysis depends on Cys-361, which acts as the Amidino-cysteine intermediate.

It belongs to the agmatine deiminase family.

The catalysed reaction is agmatine + H2O = N-carbamoylputrescine + NH4(+). The sequence is that of Putative agmatine deiminase from Shewanella baltica (strain OS195).